We begin with the raw amino-acid sequence, 596 residues long: Sodium/mannose cotransporter SLC5A10 (596 aa).

Over 1–15 (MAANSTSDLHTPGTQ) the chain is Extracellular. N-linked (GlcNAc...) asparagine glycosylation occurs at Asn4. A helical transmembrane segment spans residues 16–36 (LSVADIIVITVYFALNVAVGI). The Cytoplasmic portion of the chain corresponds to 37–72 (WSSCRASRNTVNGYFLAGRDMTWWPIGASLFASSEG). Residues 73-93 (SGLFIGLAGSGAAGGLAVAGF) form a helical membrane-spanning segment. The Extracellular portion of the chain corresponds to 94–99 (EWNATY). Asn96 is a glycosylation site (N-linked (GlcNAc...) asparagine). A helical transmembrane segment spans residues 100-120 (VLLALAWVFVPIYISSEIVTL). The Cytoplasmic segment spans residues 121 to 149 (PEYIQKRYGGQRIRMYLSVLSLLLSVFTK). Ser141 and Ser145 each carry phosphoserine. A Phosphothreonine modification is found at Thr148. Residues 150–170 (ISLDLYAGALFVHICLGWNFY) traverse the membrane as a helical segment. Residues 171-173 (LST) are Extracellular-facing. The chain crosses the membrane as a helical span at residues 174 to 194 (ILTLGITALYTIAGGLAAVIY). Topologically, residues 195 to 200 (TDALQT) are cytoplasmic. Residues 201-221 (LIMVVGAVILTIKAFDQIGGY) form a helical membrane-spanning segment. The Extracellular segment spans residues 222–264 (GQLEAAYAQAIPSRTIANTTCHLPRTDAMHMFRDPHTGDLPWT). The helical transmembrane segment at 265–285 (GMTFGLTIMATWYWCTDQVIV) threads the bilayer. Residues 286 to 300 (QRSLSARDLNHAKAG) lie on the Cytoplasmic side of the membrane. Residues 301-321 (SILASYLKMLPMGLIIMPGMI) traverse the membrane as a helical segment. The Extracellular segment spans residues 322-355 (SRALFPDDVGCVVPSECLRACGAEVGCSNIAYPK). Residues 356–376 (LVMELMPIGLRGLMIAVMLAA) traverse the membrane as a helical segment. The Cytoplasmic portion of the chain corresponds to 377–409 (LMSSLTSIFNSSSTLFTMDIWRRLRPRSGEREL). The chain crosses the membrane as a helical span at residues 410–430 (LLVGRLVIVALIGVSVAWIPV). Residues 431–443 (LQDSNSGQLFIYM) are Extracellular-facing. The chain crosses the membrane as a helical span at residues 444-464 (QSVTSSLAPPVTAVFVLGVFW). Over 465 to 471 (RRANEQG) the chain is Cytoplasmic. The chain crosses the membrane as a helical span at residues 472-492 (AFWGLIAGLVVGATRLVLEFL). Topologically, residues 493–513 (NPAPPCGEPDTRPAVLGSIHY) are extracellular. A helical transmembrane segment spans residues 514 to 534 (LHFAVALFALSGAVVVAGSLL). Residues 535–575 (TPPPQSVQIENLTWWTLAQDVPLGTKAGDGQTPQKHAFWAR) lie on the Cytoplasmic side of the membrane. Residues 576 to 596 (VCGFNAILLMCVNIFFYAYFA) traverse the membrane as a helical segment.

The protein belongs to the sodium:solute symporter (SSF) (TC 2.A.21) family. As to expression, predominantly expressed at high levels in kidney. Very low expression is detected in testes. Expressed in kidney. In terms of tissue distribution, the most abundant isoform expressed in kidney.

The protein localises to the apical cell membrane. The catalysed reaction is D-mannose(out) + Na(+)(out) = D-mannose(in) + Na(+)(in). It carries out the reaction D-fructopyranose(out) + Na(+)(out) = D-fructopyranose(in) + Na(+)(in). Its activity is regulated as follows. Inhibited by phlorizin. Electrogenic Na+-coupled sugar symporter that actively transports D-mannose or D-fructose at the plasma membrane, with a Na+ to sugar coupling ratio of 1:1. Transporter activity is driven by a transmembrane Na+ electrochemical gradient set by the Na+/K+ pump. Exclusively recognizes sugar substrates having a pyranose ring with an axial hydroxyl group on carbon 2. Has likely evolved to enable renal reabsorption of D-mannose, an important constituent of oligosaccharide chains of glycoproteins. Contributes to dietary D-fructose reabsorption from glomerular filtrate across the brush border of the kidney. In terms of biological role, appears to have no transporter activity. This Homo sapiens (Human) protein is Sodium/mannose cotransporter SLC5A10 (SLC5A10).